We begin with the raw amino-acid sequence, 143 residues long: Ribosome-binding factor A (143 aa).

Residues 117 to 143 (DAEIARRSQGAMPAGEADPYRHSDEEE) form a disordered region. Residues 134–143 (DPYRHSDEEE) show a composition bias toward basic and acidic residues.

It belongs to the RbfA family. Monomer. Binds 30S ribosomal subunits, but not 50S ribosomal subunits or 70S ribosomes.

The protein resides in the cytoplasm. In terms of biological role, one of several proteins that assist in the late maturation steps of the functional core of the 30S ribosomal subunit. Associates with free 30S ribosomal subunits (but not with 30S subunits that are part of 70S ribosomes or polysomes). Required for efficient processing of 16S rRNA. May interact with the 5'-terminal helix region of 16S rRNA. In Cutibacterium acnes (strain DSM 16379 / KPA171202) (Propionibacterium acnes), this protein is Ribosome-binding factor A.